Here is a 303-residue protein sequence, read N- to C-terminus: E3 ubiquitin-protein ligase CCNB1IP1 homolog (303 aa).

Residues 3-42 form an RING-type; degenerate zinc finger; sequence CNACWRELEGQAVSTTCGHLLCTEDAKKILSNDAACPICD. Residues 119-184 are a coiled coil; the sequence is LEEVHTAYQK…YESAKRSAIQ (66 aa). The tract at residues 201-268 is disordered; it reads VPNIMDSSDP…DIRPRQPARP (68 aa).

In terms of assembly, interacts with ZIP4 and PTD. Expressed in young panicles.

Its subcellular location is the nucleus. The protein resides in the chromosome. It catalyses the reaction S-ubiquitinyl-[E2 ubiquitin-conjugating enzyme]-L-cysteine + [acceptor protein]-L-lysine = [E2 ubiquitin-conjugating enzyme]-L-cysteine + N(6)-ubiquitinyl-[acceptor protein]-L-lysine.. The protein operates within protein modification; protein ubiquitination. In terms of biological role, ubiquitin E3 ligase required for class I crossover (CO) formation during meiosis. The polypeptide is E3 ubiquitin-protein ligase CCNB1IP1 homolog (Oryza sativa subsp. japonica (Rice)).